Here is a 235-residue protein sequence, read N- to C-terminus: Claudin-15 (235 aa).

A topological domain (cytoplasmic) is located at residue methionine 1. The chain crosses the membrane as a helical span at residues 2–24; that stretch reads LVAVEIFGFFLTAVGLLMLGVTL. The Extracellular segment spans residues 25-74; that stretch reads AHSSWRVSTVHGNVITTNTIFENLWYSCATDSMGVHNCWEFPSMLALSGY. Cysteines 52 and 62 form a disulfide. A helical membrane pass occupies residues 75–99; it reads IQACRALMITAILLGFLGLFLGMVG. Residues 100–115 are Cytoplasmic-facing; the sequence is LRCTNIGGLELSRKTK. Residue serine 111 is modified to Phosphoserine. The chain crosses the membrane as a helical span at residues 116–140; the sequence is LAATAGALHILAGICGMVAVSWYAF. Over 141-159 the chain is Extracellular; the sequence is NITRDFFNPLYAGTKYELG. The interval 146–147 is important for the formation of tight-junction strand-like structures; that stretch reads FF. Residues 160-182 traverse the membrane as a helical segment; that stretch reads PALYLGWSACLLAILGGICLFSN. Residues 183–235 lie on the Cytoplasmic side of the membrane; sequence CCCSRDRDPATGVQLPYKAPVIPAASLAARLPAAASDEEGDSSFGKYGKNAYV. Phosphoserine occurs at positions 218 and 225.

It belongs to the claudin family. As to quaternary structure, can form homo- and heteropolymeric tight junction strands. In terms of processing, palmitoylated.

It is found in the cell junction. The protein localises to the tight junction. The protein resides in the cell membrane. It carries out the reaction Na(+)(in) = Na(+)(out). The enzyme catalyses K(+)(in) = K(+)(out). The catalysed reaction is Cs(+)(in) = Cs(+)(out). It catalyses the reaction Rb(+)(in) = Rb(+)(out). It carries out the reaction Li(+)(in) = Li(+)(out). The enzyme catalyses NH4(+)(in) = NH4(+)(out). The catalysed reaction is methylamine(out) = methylamine(in). It catalyses the reaction H2O(in) = H2O(out). Forms paracellular channels: polymerizes in tight junction strands with cation- and water-selective channels through the strands, conveying epithelial permeability in a process known as paracellular tight junction permeability. In intestinal epithelium, allows for sodium and water fluxes from the peritoneal side to the lumen of the intestine to regulate nutrient absorption and intestinal morphogenesis. The chain is Claudin-15 (CLDN15) from Bos taurus (Bovine).